We begin with the raw amino-acid sequence, 399 residues long: Fructose-1,6-bisphosphate aldolase/phosphatase (399 aa).

Asp-11 acts as the Proton acceptor; for FBP phosphatase activity in catalysis. Residues Asp-11, His-18, Asp-52, and Asp-53 each contribute to the Mg(2+) site. Residue His-18 participates in beta-D-fructose 1,6-bisphosphate binding. His-18 provides a ligand contact to dihydroxyacetone phosphate. Tyr-91 contacts beta-D-fructose 1,6-bisphosphate. A Mg(2+)-binding site is contributed by Gln-95. 104-105 (GN) contributes to the beta-D-fructose 1,6-bisphosphate binding site. Asp-132 is a binding site for Mg(2+). Lys-133 is a beta-D-fructose 1,6-bisphosphate binding site. Lys-133 contributes to the dihydroxyacetone phosphate binding site. Tyr-229 serves as the catalytic Proton donor/acceptor; for FBP aldolase activity. Positions 232, 233, and 234 each coordinate Mg(2+). The active-site Schiff-base intermediate with DHAP; for FBP aldolase activity is the Lys-232. Beta-D-fructose 1,6-bisphosphate is bound by residues 242–243 (QS), Arg-266, Asp-297, and Tyr-358. The dihydroxyacetone phosphate site is built by Arg-266 and Asp-297.

Belongs to the FBP aldolase/phosphatase family. Homooctamer; dimer of tetramers. The cofactor is Mg(2+).

It catalyses the reaction beta-D-fructose 1,6-bisphosphate + H2O = beta-D-fructose 6-phosphate + phosphate. The catalysed reaction is beta-D-fructose 1,6-bisphosphate = D-glyceraldehyde 3-phosphate + dihydroxyacetone phosphate. It participates in carbohydrate biosynthesis; gluconeogenesis. Functionally, catalyzes two subsequent steps in gluconeogenesis: the aldol condensation of dihydroxyacetone phosphate (DHAP) and glyceraldehyde-3-phosphate (GA3P) to fructose-1,6-bisphosphate (FBP), and the dephosphorylation of FBP to fructose-6-phosphate (F6P). The chain is Fructose-1,6-bisphosphate aldolase/phosphatase from Pyrobaculum neutrophilum (strain DSM 2338 / JCM 9278 / NBRC 100436 / V24Sta) (Thermoproteus neutrophilus).